Reading from the N-terminus, the 106-residue chain is Small ribosomal subunit protein mS33 (106 aa).

Ser-2 is subject to N-acetylserine. Positions 81–106 are disordered; sequence EQRRLKKLRGKGKPRKGEGKRATKKK. Residues 84–94 are compositionally biased toward basic residues; the sequence is RLKKLRGKGKP. Residues 95 to 106 are compositionally biased toward basic and acidic residues; sequence RKGEGKRATKKK.

It belongs to the mitochondrion-specific ribosomal protein mS33 family. As to quaternary structure, component of the mitochondrial ribosome small subunit (28S) which comprises a 12S rRNA and about 30 distinct proteins.

Its subcellular location is the mitochondrion. This is Small ribosomal subunit protein mS33 (Mrps33) from Mus musculus (Mouse).